The sequence spans 312 residues: Aldehyde reductase YPR1 (312 aa).

Tyr-56 (proton donor) is an active-site residue. His-112 provides a ligand contact to substrate. 220 to 274 (SPFGSANAPLLKEQAIIDMAKKHGVEPAQLIISWSIQRGYVVLAKSVNPERIVSN) contacts NADP(+).

This sequence belongs to the aldo/keto reductase family.

The protein resides in the cytoplasm. The enzyme catalyses a primary alcohol + NADP(+) = an aldehyde + NADPH + H(+). The catalysed reaction is 2-methylbutan-1-ol + NADP(+) = 2-methylbutanal + NADPH + H(+). It carries out the reaction hexan-1-ol + NADP(+) = hexanal + NADPH + H(+). Aldehyde reductase with broad substrate specificity, catalyzing the NADPH-dependent reduction of aldehydes into the corresponding alcohols. In vitro, displays high specific activity towards 2-methylbutanal (2-methylbutyraldehyde), as well as other aldehydes such as hexanal (a toxic lipid peroxidation product and phytoalexin), but exhibits extremely low activity as a glycerol dehydrogenase. Seems to contribute to 2-methylbutanal reduction in vivo, and may therefore play a role in isoleucine catabolism and fusel alcohol formation. The sequence is that of Aldehyde reductase YPR1 (YPR1) from Saccharomyces cerevisiae (strain ATCC 204508 / S288c) (Baker's yeast).